Reading from the N-terminus, the 31-residue chain is Cytochrome b6-f complex subunit 6 (31 aa).

Residues 3-23 (LFIGYIIFLVAFFGLATGLFL) traverse the membrane as a helical segment.

The protein belongs to the PetL family. In terms of assembly, the 4 large subunits of the cytochrome b6-f complex are cytochrome b6, subunit IV (17 kDa polypeptide, PetD), cytochrome f and the Rieske protein, while the 4 small subunits are PetG, PetL, PetM and PetN. The complex functions as a dimer.

The protein localises to the plastid. It is found in the chloroplast thylakoid membrane. Component of the cytochrome b6-f complex, which mediates electron transfer between photosystem II (PSII) and photosystem I (PSI), cyclic electron flow around PSI, and state transitions. PetL is important for photoautotrophic growth as well as for electron transfer efficiency and stability of the cytochrome b6-f complex. The polypeptide is Cytochrome b6-f complex subunit 6 (Porphyra purpurea (Red seaweed)).